The sequence spans 360 residues: Phosphoserine aminotransferase (360 aa).

L-glutamate is bound at residue Arg42. Residues 76 to 77 (AS), Trp102, Thr152, Asp172, and Gln195 contribute to the pyridoxal 5'-phosphate site. The residue at position 196 (Lys196) is an N6-(pyridoxal phosphate)lysine. A pyridoxal 5'-phosphate-binding site is contributed by 237 to 238 (NT).

The protein belongs to the class-V pyridoxal-phosphate-dependent aminotransferase family. SerC subfamily. Homodimer. It depends on pyridoxal 5'-phosphate as a cofactor.

It is found in the cytoplasm. The catalysed reaction is O-phospho-L-serine + 2-oxoglutarate = 3-phosphooxypyruvate + L-glutamate. The enzyme catalyses 4-(phosphooxy)-L-threonine + 2-oxoglutarate = (R)-3-hydroxy-2-oxo-4-phosphooxybutanoate + L-glutamate. It functions in the pathway amino-acid biosynthesis; L-serine biosynthesis; L-serine from 3-phospho-D-glycerate: step 2/3. Catalyzes the reversible conversion of 3-phosphohydroxypyruvate to phosphoserine and of 3-hydroxy-2-oxo-4-phosphonooxybutanoate to phosphohydroxythreonine. The polypeptide is Phosphoserine aminotransferase (Bacillus cereus (strain ATCC 14579 / DSM 31 / CCUG 7414 / JCM 2152 / NBRC 15305 / NCIMB 9373 / NCTC 2599 / NRRL B-3711)).